The following is a 34-amino-acid chain: Kappa-theraphotoxin-Scg1a (34 aa).

Intrachain disulfides connect C2-C16, C9-C21, and C15-C28. Positions 4–6 (YLF) are involved in active face.

The protein belongs to the neurotoxin 10 (Hwtx-1) family. 09 (HaTx) subfamily. Expressed by the venom gland.

It is found in the secreted. Its function is as follows. Reversibly inhibits potassium currents in oocytes expressing Kv2.1/KCNB1 channels (Kd=2.7 uM). Acts by shifting activation of the channel to more depolarized voltages. The toxin may bind to the S3b-S4 helices of the voltage sensor paddle. One, two, three or four toxin molecules may bind the Kv2.1/KCNB1 channel. It shows low to moderate affinity for lipid bilayers. It partitions into the bilayer membrane, where it stabilizes at the water/membrane interface. This chain is Kappa-theraphotoxin-Scg1a, found in Stromatopelma calceatum griseipes (Feather leg baboon tarantula).